Consider the following 333-residue polypeptide: 6-phosphogluconolactonase (333 aa).

Belongs to the cycloisomerase 2 family.

The enzyme catalyses 6-phospho-D-glucono-1,5-lactone + H2O = 6-phospho-D-gluconate + H(+). It participates in carbohydrate degradation; pentose phosphate pathway; D-ribulose 5-phosphate from D-glucose 6-phosphate (oxidative stage): step 2/3. In terms of biological role, catalyzes the hydrolysis of 6-phosphogluconolactone to 6-phosphogluconate. The chain is 6-phosphogluconolactonase from Yersinia enterocolitica serotype O:8 / biotype 1B (strain NCTC 13174 / 8081).